The sequence spans 304 residues: tRNA dimethylallyltransferase (304 aa).

16–23 (GPTASGKS) contacts ATP. 18–23 (TASGKS) provides a ligand contact to substrate. Interaction with substrate tRNA stretches follow at residues 41–44 (DSMQ) and 165–169 (QRIIR).

Belongs to the IPP transferase family. As to quaternary structure, monomer. Mg(2+) is required as a cofactor.

The catalysed reaction is adenosine(37) in tRNA + dimethylallyl diphosphate = N(6)-dimethylallyladenosine(37) in tRNA + diphosphate. Functionally, catalyzes the transfer of a dimethylallyl group onto the adenine at position 37 in tRNAs that read codons beginning with uridine, leading to the formation of N6-(dimethylallyl)adenosine (i(6)A). This chain is tRNA dimethylallyltransferase, found in Allorhizobium ampelinum (strain ATCC BAA-846 / DSM 112012 / S4) (Agrobacterium vitis (strain S4)).